The primary structure comprises 436 residues: Protein arginine methyltransferase NDUFAF7, mitochondrial (436 aa).

Residues 1-41 constitute a mitochondrion transit peptide; it reads MNALVRRCVARAGLPCIWRGKCYSSGNEPAESNQVTPMLRH. The interval 411–436 is disordered; that stretch reads GSQERNACQSKTPSSSVAGFDELVWQ. Over residues 413-427 the composition is skewed to polar residues; the sequence is QERNACQSKTPSSSV.

This sequence belongs to the NDUFAF7 family. Interacts with NDUFS2.

The protein resides in the mitochondrion. It carries out the reaction L-arginyl-[protein] + 2 S-adenosyl-L-methionine = N(omega),N(omega)'-dimethyl-L-arginyl-[protein] + 2 S-adenosyl-L-homocysteine + 2 H(+). In terms of biological role, arginine methyltransferase involved in the assembly or stability of mitochondrial NADH:ubiquinone oxidoreductase complex (complex I). Acts by mediating symmetric dimethylation of 'Arg-118' of NDUFS2 after it assembles into the complex I, stabilizing the early intermediate complex. This Mus musculus (Mouse) protein is Protein arginine methyltransferase NDUFAF7, mitochondrial.